Consider the following 565-residue polypeptide: Sensor histidine kinase MtrB (565 aa).

Residues 1–13 (MMWGSRRRTRSRW) show a composition bias toward basic residues. Residues 1–21 (MMWGSRRRTRSRWGRSGPMTR) are disordered. Transmembrane regions (helical) follow at residues 42-62 (VVALTLGLSLAVILALGFVLT) and 213-233 (GTMITGGAVLLVLLAGIALLV). In terms of domain architecture, HAMP spans 235–287 (RQVVVPVRSASRIAERFAEGHLSERMPVRGEDDMARLAMSFNDMAESLSRQIT). Positions 302-519 (DVSHELRTPL…CFRLTLPLVR (218 aa)) constitute a Histidine kinase domain. The residue at position 305 (His305) is a Phosphohistidine; by autocatalysis. The segment at 524–565 (TTSPLPMKPIPQPSPSGGQSPSTGPQHAKDRARQREHAERSL) is disordered. Low complexity predominate over residues 538–549 (PSGGQSPSTGPQ). Positions 550-565 (HAKDRARQREHAERSL) are enriched in basic and acidic residues.

The protein resides in the cell membrane. The enzyme catalyses ATP + protein L-histidine = ADP + protein N-phospho-L-histidine.. Its function is as follows. Member of the two-component regulatory system MtrA/MtrB. Seems to function as a membrane-associated protein kinase that phosphorylates MtrA in response to environmental signals. The protein is Sensor histidine kinase MtrB (mtrB) of Mycolicibacterium paratuberculosis (strain ATCC BAA-968 / K-10) (Mycobacterium paratuberculosis).